A 54-amino-acid chain; its full sequence is Large ribosomal subunit protein bL32 (54 aa).

Residues 1–24 are disordered; that stretch reads MAVQKSKPTRSKRGMRRSHDSLKE. Residues 7 to 16 show a composition bias toward basic residues; sequence KPTRSKRGMR.

It belongs to the bacterial ribosomal protein bL32 family.

The protein is Large ribosomal subunit protein bL32 of Buchnera aphidicola subsp. Schizaphis graminum (strain Sg).